The chain runs to 518 residues: DNA-binding protein D-ETS-4 (518 aa).

Disordered regions lie at residues 74–113 and 152–172; these read SQPI…QSSP and LPPS…SCGE. Over residues 84 to 94 the composition is skewed to polar residues; it reads TAPYTNPSSHQ. Residues 102-113 are compositionally biased toward low complexity; sequence PHSAYPSPQSSP. Polar residues predominate over residues 158–171; that stretch reads ESNCETPSPRSSCG. One can recognise a PNT domain in the interval 258-344; it reads HAKREADAIC…AQLEIWKMAY (87 aa). Residues 393–426 are disordered; sequence APLNGSTTSPPATNASNGGTATVKRPNGGRTGGG. The segment covering 396–412 has biased composition (polar residues); it reads NGSTTSPPATNASNGGT. Residues 430–513 constitute a DNA-binding region (ETS); the sequence is IHLWQFLKEL…RSQRLVYQFC (84 aa).

The protein belongs to the ETS family. As to expression, transient high expression in pole cells during embryonic stages 8-11.

The protein localises to the nucleus. Its function is as follows. May have a role in germline development. The protein is DNA-binding protein D-ETS-4 (Ets98B) of Drosophila melanogaster (Fruit fly).